The chain runs to 286 residues: MKIIALRSSLKLAARIAEELKTEPVMPDERRFPDGELYLRYDEDLTGHNIFIIGNTHSDAEVMEMILTLSAIQDYRTKSVNIIAPYYGYARQHQRYKNGEPISSQILTEIYSSYSNSIATVDIHDEKTLSYSKVKFSDLHANDAIVRYYKNVDVDYVVSPDDGGLARVADISAKLGKKHFFIEKKRIDDRTVEMKVPNVDVNGKKLLIVDDIISTGGTIAKSSGLLREKGASKIYVSAVHGLFVNGSENKILQNADEIHVTDTVESKFSDISVYQEVCNYIRDIDA.

ATP contacts are provided by residues 34 to 36 (DGE) and 91 to 93 (RQH). 2 residues coordinate Mg(2+): His124 and Asp161. Lys184 is a catalytic residue. D-ribose 5-phosphate-binding positions include Arg186, Asp210, and 214-218 (STGGT).

It belongs to the ribose-phosphate pyrophosphokinase family. Class III (archaeal) subfamily. In terms of assembly, homodimer. Mg(2+) is required as a cofactor.

It localises to the cytoplasm. The enzyme catalyses D-ribose 5-phosphate + ATP = 5-phospho-alpha-D-ribose 1-diphosphate + AMP + H(+). The protein operates within metabolic intermediate biosynthesis; 5-phospho-alpha-D-ribose 1-diphosphate biosynthesis; 5-phospho-alpha-D-ribose 1-diphosphate from D-ribose 5-phosphate (route I): step 1/1. Functionally, involved in the biosynthesis of the central metabolite phospho-alpha-D-ribosyl-1-pyrophosphate (PRPP) via the transfer of pyrophosphoryl group from ATP to 1-hydroxyl of ribose-5-phosphate (Rib-5-P). The polypeptide is Ribose-phosphate pyrophosphokinase (Thermoplasma volcanium (strain ATCC 51530 / DSM 4299 / JCM 9571 / NBRC 15438 / GSS1)).